A 211-amino-acid chain; its full sequence is Adenylate kinase (211 aa).

10 to 15 (GSGKGT) provides a ligand contact to ATP. Residues 30-59 (STGDLFRENILNSTALGQEIKKIVERGELV) are NMP. AMP contacts are provided by residues threonine 31, arginine 36, 57–59 (ELV), 85–88 (GFPR), and glutamine 92. The LID stretch occupies residues 121 to 158 (GRRICKSCNNIFNIYTLTTKKNGICDVCGGDLYQREDD). Arginine 122 serves as a coordination point for ATP. Zn(2+) is bound by residues cysteine 125 and cysteine 128. 131 to 132 (IF) is a binding site for ATP. The Zn(2+) site is built by cysteine 145 and cysteine 148. Residues arginine 155 and arginine 166 each contribute to the AMP site. An ATP-binding site is contributed by valine 194.

Belongs to the adenylate kinase family. As to quaternary structure, monomer.

It is found in the cytoplasm. It carries out the reaction AMP + ATP = 2 ADP. The protein operates within purine metabolism; AMP biosynthesis via salvage pathway; AMP from ADP: step 1/1. In terms of biological role, catalyzes the reversible transfer of the terminal phosphate group between ATP and AMP. Plays an important role in cellular energy homeostasis and in adenine nucleotide metabolism. This chain is Adenylate kinase, found in Borreliella burgdorferi (strain ATCC 35210 / DSM 4680 / CIP 102532 / B31) (Borrelia burgdorferi).